Consider the following 337-residue polypeptide: Heat-inducible transcription repressor HrcA (337 aa).

This sequence belongs to the HrcA family.

In terms of biological role, negative regulator of class I heat shock genes (grpE-dnaK-dnaJ and groELS operons). Prevents heat-shock induction of these operons. This chain is Heat-inducible transcription repressor HrcA, found in Kocuria rhizophila (strain ATCC 9341 / DSM 348 / NBRC 103217 / DC2201).